The chain runs to 1183 residues: ATP-dependent helicase/nuclease subunit A (1183 aa).

The UvrD-like helicase ATP-binding domain occupies 3 to 461 (VQWTDEQQRA…IDLTKNFRSR (459 aa)). 24–31 (AAAGSGKT) contributes to the ATP binding site. One can recognise a UvrD-like helicase C-terminal domain in the interval 473-769 (RQVMDEAVGE…RIMTIHQSKG (297 aa)).

This sequence belongs to the helicase family. AddA subfamily. In terms of assembly, heterodimer of AddA and AddB/RexB. Requires Mg(2+) as cofactor.

It catalyses the reaction Couples ATP hydrolysis with the unwinding of duplex DNA by translocating in the 3'-5' direction.. It carries out the reaction ATP + H2O = ADP + phosphate + H(+). Functionally, the heterodimer acts as both an ATP-dependent DNA helicase and an ATP-dependent, dual-direction single-stranded exonuclease. Recognizes the chi site generating a DNA molecule suitable for the initiation of homologous recombination. The AddA nuclease domain is required for chi fragment generation; this subunit has the helicase and 3' -&gt; 5' nuclease activities. This is ATP-dependent helicase/nuclease subunit A from Exiguobacterium sibiricum (strain DSM 17290 / CCUG 55495 / CIP 109462 / JCM 13490 / 255-15).